We begin with the raw amino-acid sequence, 457 residues long: Argininosuccinate lyase (457 aa).

Belongs to the lyase 1 family. Argininosuccinate lyase subfamily.

Its subcellular location is the cytoplasm. It carries out the reaction 2-(N(omega)-L-arginino)succinate = fumarate + L-arginine. Its pathway is amino-acid biosynthesis; L-arginine biosynthesis; L-arginine from L-ornithine and carbamoyl phosphate: step 3/3. This Haemophilus influenzae (strain PittGG) protein is Argininosuccinate lyase.